The primary structure comprises 436 residues: Phosphomethylpyrimidine synthase (436 aa).

Residues N68, M97, Y126, H166, 188–190 (SRG), 229–232 (DGFR), and E268 contribute to the substrate site. H272 is a Zn(2+) binding site. Residue Y295 coordinates substrate. H336 lines the Zn(2+) pocket. Positions 412, 415, and 419 each coordinate [4Fe-4S] cluster.

Belongs to the ThiC family. Homodimer. The cofactor is [4Fe-4S] cluster.

It carries out the reaction 5-amino-1-(5-phospho-beta-D-ribosyl)imidazole + S-adenosyl-L-methionine = 4-amino-2-methyl-5-(phosphooxymethyl)pyrimidine + CO + 5'-deoxyadenosine + formate + L-methionine + 3 H(+). The protein operates within cofactor biosynthesis; thiamine diphosphate biosynthesis. Functionally, catalyzes the synthesis of the hydroxymethylpyrimidine phosphate (HMP-P) moiety of thiamine from aminoimidazole ribotide (AIR) in a radical S-adenosyl-L-methionine (SAM)-dependent reaction. The sequence is that of Phosphomethylpyrimidine synthase from Geobacter metallireducens (strain ATCC 53774 / DSM 7210 / GS-15).